We begin with the raw amino-acid sequence, 355 residues long: Protein RecA (355 aa).

73 to 80 serves as a coordination point for ATP; it reads GPESSGKT.

Belongs to the RecA family.

It is found in the cytoplasm. Can catalyze the hydrolysis of ATP in the presence of single-stranded DNA, the ATP-dependent uptake of single-stranded DNA by duplex DNA, and the ATP-dependent hybridization of homologous single-stranded DNAs. It interacts with LexA causing its activation and leading to its autocatalytic cleavage. The sequence is that of Protein RecA from Solidesulfovibrio magneticus (strain ATCC 700980 / DSM 13731 / RS-1) (Desulfovibrio magneticus).